The sequence spans 456 residues: Acetylcholine receptor subunit alpha (456 aa).

Positions 1 to 20 (MNYFILILPILPYLYGPAVC) are cleaved as a signal peptide. Residues 21 to 230 (SEDETRLVKT…ITYHFLLLRL (210 aa)) are Extracellular-facing. Cystine bridges form between Cys148/Cys162 and Cys212/Cys213. A glycan (N-linked (GlcNAc...) asparagine) is linked at Asn161. The next 3 membrane-spanning stretches (helical) occupy residues 231-255 (PLYF…VFYL), 263-281 (MTLS…LVIV), and 297-316 (YMLF…VIVI). Residues 317 to 428 (NTHHRSPSTH…WKFVAMVLDH (112 aa)) are Cytoplasmic-facing. Residues 429–447 (ILLCVFMAVCIIGTLGVFA) form a helical membrane-spanning segment.

The protein belongs to the ligand-gated ion channel (TC 1.A.9) family. Acetylcholine receptor (TC 1.A.9.1) subfamily. Alpha-1/CHRNA1 sub-subfamily. In terms of assembly, one of the alpha chains that assemble within the acetylcholine receptor, a pentamer of two alpha chains, a beta, a delta, and a gamma or epsilon chains.

The protein localises to the postsynaptic cell membrane. It localises to the cell membrane. The catalysed reaction is K(+)(in) = K(+)(out). It carries out the reaction Na(+)(in) = Na(+)(out). Its function is as follows. Upon acetylcholine binding, the AChR responds by an extensive change in conformation that affects all subunits and leads to opening of an ion-conducting channel across the plasma membrane. This Danio rerio (Zebrafish) protein is Acetylcholine receptor subunit alpha (chrna1).